A 297-amino-acid polypeptide reads, in one-letter code: Homoserine kinase (297 aa).

ATP is bound at residue 82-92 (PVSRGLGSSAA).

Belongs to the GHMP kinase family. Homoserine kinase subfamily.

It localises to the cytoplasm. The enzyme catalyses L-homoserine + ATP = O-phospho-L-homoserine + ADP + H(+). It functions in the pathway amino-acid biosynthesis; L-threonine biosynthesis; L-threonine from L-aspartate: step 4/5. Catalyzes the ATP-dependent phosphorylation of L-homoserine to L-homoserine phosphate. This Clostridium botulinum (strain Loch Maree / Type A3) protein is Homoserine kinase.